The primary structure comprises 160 residues: MSDSPTTAHTRLELPIDIIKIQALLPHRYPFLLVDRILELDQKQKRIVAQKNVSINEPFFQGHFPEHPVMPGVLIIEALAQAGGVMTQLNLSHNGHSSLLFYMVRVDNARFNKQVVPGDILILDMTMKRRIRNMGCYYGEARVNGEVVACADIMCAGVKS.

His-63 is an active-site residue.

Belongs to the thioester dehydratase family. FabZ subfamily.

The protein resides in the cytoplasm. The catalysed reaction is a (3R)-hydroxyacyl-[ACP] = a (2E)-enoyl-[ACP] + H2O. Involved in unsaturated fatty acids biosynthesis. Catalyzes the dehydration of short chain beta-hydroxyacyl-ACPs and long chain saturated and unsaturated beta-hydroxyacyl-ACPs. The sequence is that of 3-hydroxyacyl-[acyl-carrier-protein] dehydratase FabZ from Xylella fastidiosa (strain 9a5c).